The sequence spans 110 residues: Protein RALF-like 4 (110 aa).

The signal sequence occupies residues 1–23 (MGVKMLLIFGLLILAMVAKSVNA). Positions 24-58 (TYPLTKSCINGQGCIGEDDELESLMDSETNRRQLA) are cleaved as a propeptide — removed in mature form. Intrachain disulfides connect C76–C86 and C99–C105.

This sequence belongs to the plant rapid alkalinization factor (RALF) family. In terms of processing, proteolytically cleaved, probably by S1P, a subtilisin-like serine protease (subtilase).

The protein localises to the secreted. Its function is as follows. Cell signaling peptide that may regulate plant stress, growth, and development. Mediates a rapid alkalinization of extracellular space by mediating a transient increase in the cytoplasmic Ca(2+) concentration leading to a calcium-dependent signaling events through a cell surface receptor and a concomitant activation of some intracellular mitogen-activated protein kinases. This chain is Protein RALF-like 4 (RALFL4), found in Arabidopsis thaliana (Mouse-ear cress).